A 502-amino-acid chain; its full sequence is ATP-dependent DNA helicase uvsW (502 aa).

Positions valine 122–phenylalanine 280 constitute a Helicase ATP-binding domain. Residue leucine 135–serine 142 participates in ATP binding. The short motif at aspartate 232–histidine 235 is the DEAH box element. The region spanning tryptophan 335 to asparagine 501 is the Helicase C-terminal domain.

As to quaternary structure, probably interacts with UvsW.1. Interacts with gp32. The cofactor is Mg(2+).

It carries out the reaction Couples ATP hydrolysis with the unwinding of duplex DNA by translocating in the 3'-5' direction.. The enzyme catalyses ATP + H2O = ADP + phosphate + H(+). Unwinding activity is strongly stimulated by single-stranded binding protein gp32, the ssDNA annealing activity is partially inhibited by gp32 and strongly inhibited by ATP-gamma-S. Another study did not find gp32 stimulation of helicase activity. Holliday junction (HJ) branch migration is inhibited by ATP-gamma-S. Its function is as follows. Plays important roles in recombination-dependent DNA repair and the reorganization of stalled replication forks during viral DNA synthesis. Active on in vivo-derived T4 DNA; viral DNA is highly modified by hydroxymethylation and glucosylation of cytosine residues. Helps process Holliday junction (HJ) intermediates to mature products by catalyzing branch migration. Probably able to catalyze replication fork regression. Unwinds HJ and Y-branched but not linear double-stranded (ds)DNA; unwinding requires ATP and Mg(2+). Unwinds dsDNA with a 3'-single-stranded (ss)DNA overhang, suggesting it is a 3'-5' helicase. Another study does not find this activity. Unwinds D- and R-loops. Also anneals ssDNA; ATP stimulates annealing. Has ssDNA and dsDNA-stimulated ATPase activity, also hydrolyzes GTP in the presence of DNA. This Enterobacteria phage T4 (Bacteriophage T4) protein is ATP-dependent DNA helicase uvsW.